Consider the following 176-residue polypeptide: Vitamin K epoxide reductase complex subunit 1-like protein 1 (176 aa).

Residues 1-13 (MAAPVLLRVSVPR) lie on the Cytoplasmic side of the membrane. Residues 14-36 (WERVARYAVCAAGILLSIYAYHV) form a helical membrane-spanning segment. Residues 37–87 (EREKERDPEHRALCDLGPWVKCSAALASRWGRGFGLLGSIFGKDGVLNQPN) are Lumenal-facing. An intrachain disulfide couples C50 to C58. Residue N87 participates in (S)-warfarin binding. Residues 88–102 (SVFGLIFYILQLLLG) traverse the membrane as a helical segment. The Cytoplasmic portion of the chain corresponds to 103–107 (MTASA). Residues 108–135 (VAALVLMTSSIVSVVGSLYLAYILYFVL) form a helical membrane-spanning segment. The Lumenal segment spans residues 136–138 (KEF). C139 and C142 are oxidised to a cystine. Residues 139–160 (CIICVTTYVLNFLLLIINYKRL) form a helical membrane-spanning segment. 2 residues coordinate phylloquinone: C142 and Y146. Y146 provides a ligand contact to (S)-warfarin. At 161 to 176 (VYLNEAWKRQLQPKED) the chain is on the cytoplasmic side.

The protein belongs to the VKOR family. Detected in testis and lung.

It localises to the endoplasmic reticulum membrane. The enzyme catalyses phylloquinone + [protein]-disulfide + H2O = 2,3-epoxyphylloquinone + [protein]-dithiol. It catalyses the reaction phylloquinol + [protein]-disulfide = phylloquinone + [protein]-dithiol. With respect to regulation, inhibited by warfarin (coumadin). Warfarin locks VKORC1 in both redox states into the closed conformation. Involved in vitamin K metabolism. Can reduce inactive vitamin K 2,3-epoxide to active vitamin K, and may contribute to vitamin K-mediated protection against oxidative stress. Plays a role in vitamin K-dependent gamma-carboxylation of Glu residues in target proteins. The sequence is that of Vitamin K epoxide reductase complex subunit 1-like protein 1 (Vkorc1l1) from Mus musculus (Mouse).